Here is a 72-residue protein sequence, read N- to C-terminus: Large ribosomal subunit protein uL29 (72 aa).

This sequence belongs to the universal ribosomal protein uL29 family.

The chain is Large ribosomal subunit protein uL29 (rpmC) from Treponema pallidum (strain Nichols).